Consider the following 153-residue polypeptide: Aspartate carbamoyltransferase regulatory chain (153 aa).

4 residues coordinate Zn(2+): cysteine 109, cysteine 114, cysteine 138, and cysteine 141.

Belongs to the PyrI family. As to quaternary structure, contains catalytic and regulatory chains. Zn(2+) is required as a cofactor.

Involved in allosteric regulation of aspartate carbamoyltransferase. This is Aspartate carbamoyltransferase regulatory chain from Cenarchaeum symbiosum (strain A).